Reading from the N-terminus, the 82-residue chain is Conotoxin MiK42 (82 aa).

The first 22 residues, 1-22, serve as a signal peptide directing secretion; the sequence is MKLTCALIVAMLLLTACQLITT. A propeptide spanning residues 23-49 is cleaved from the precursor; it reads DDFRGRQQYRTARSRTKMQNYKIFRLT. 3 disulfides stabilise this stretch: Cys-52–Cys-67, Cys-59–Cys-70, and Cys-66–Cys-80.

This sequence belongs to the conotoxin O1 superfamily. In terms of tissue distribution, expressed by the venom duct.

The protein localises to the secreted. This is Conotoxin MiK42 from Conus miles (Soldier cone).